Consider the following 406-residue polypeptide: Tryptophan synthase beta chain (406 aa).

K99 is subject to N6-(pyridoxal phosphate)lysine.

It belongs to the TrpB family. Tetramer of two alpha and two beta chains. Requires pyridoxal 5'-phosphate as cofactor.

It catalyses the reaction (1S,2R)-1-C-(indol-3-yl)glycerol 3-phosphate + L-serine = D-glyceraldehyde 3-phosphate + L-tryptophan + H2O. It participates in amino-acid biosynthesis; L-tryptophan biosynthesis; L-tryptophan from chorismate: step 5/5. Its function is as follows. The beta subunit is responsible for the synthesis of L-tryptophan from indole and L-serine. This chain is Tryptophan synthase beta chain, found in Brucella anthropi (strain ATCC 49188 / DSM 6882 / CCUG 24695 / JCM 21032 / LMG 3331 / NBRC 15819 / NCTC 12168 / Alc 37) (Ochrobactrum anthropi).